Reading from the N-terminus, the 462-residue chain is GTPase Der (462 aa).

2 consecutive EngA-type G domains span residues 3 to 170 (ITIA…TSQK) and 201 to 372 (IKIA…FNSI). Residues 9 to 16 (GRTNVGKS), 57 to 61 (DTPGI), 122 to 125 (NKIE), 207 to 214 (GKPNVGKS), 254 to 258 (DTAGI), and 319 to 322 (NKND) contribute to the GTP site. A KH-like domain is found at 373–457 (KKIHTSKITE…SIVLYFKSSK (85 aa)).

It belongs to the TRAFAC class TrmE-Era-EngA-EngB-Septin-like GTPase superfamily. EngA (Der) GTPase family. Associates with the 50S ribosomal subunit.

GTPase that plays an essential role in the late steps of ribosome biogenesis. This chain is GTPase Der, found in Buchnera aphidicola subsp. Baizongia pistaciae (strain Bp).